The sequence spans 241 residues: MIQLDKLNHCYTHQGNASHNESLSMSFDLIAKKGDIIALIGPSGAGKSSLLAMIAGFLKPDSGELHLNGELITTQAPANRPLSMLFQEHNLFPHLTVFENIGLGIHPGLKLSRQEKEDIVVAAARVGVNKYLDRLPEQLSGGQKQRVALARCLIRQRPLLLLDEPFSALDPALRKEMLELVKHIAREQKTTVLMITHSPDDALKISNKCAFIHNGKIRVFGPTQQVLGEPKDEVLIQYLGF.

The ABC transporter domain maps to 2–239 (IQLDKLNHCY…PKDEVLIQYL (238 aa)). Position 41 to 48 (41 to 48 (GPSGAGKS)) interacts with ATP.

The protein belongs to the ABC transporter superfamily. Thiamine importer (TC 3.A.1.19.1) family. The complex is composed of two ATP-binding proteins (ThiQ), two transmembrane proteins (ThiP) and a solute-binding protein (ThiB).

The protein resides in the cell inner membrane. The enzyme catalyses thiamine(out) + ATP + H2O = thiamine(in) + ADP + phosphate + H(+). Its function is as follows. Part of the ABC transporter complex ThiBPQ involved in thiamine import. Responsible for energy coupling to the transport system. This is Thiamine import ATP-binding protein ThiQ from Photobacterium profundum (strain SS9).